Reading from the N-terminus, the 335-residue chain is SLAM family member 7 (335 aa).

A signal peptide spans 1 to 22 (MAGSPTCLTLIYILWQLTGSAA). In terms of domain architecture, Ig-like V-type spans 23-124 (SGPVKELVGS…PSTQEYVLHV (102 aa)). The Extracellular segment spans residues 23–226 (SGPVKELVGS…GAADDPDSSM (204 aa)). Residues N98, N142, N148, N172, N176, and N204 are each glycosylated (N-linked (GlcNAc...) asparagine). The Ig-like C2-type domain maps to 131–206 (PKVTMGLQSN…ARNPVSRNFS (76 aa)). Intrachain disulfides connect C145–C215 and C151–C195. The helical transmembrane segment at 227 to 247 (VLLCLLLVPLLLSLFVLGLFL) threads the bilayer. Residues 248–335 (WFLKRERQEE…PRLFAYENVI (88 aa)) lie on the Cytoplasmic side of the membrane. Residues 278-296 (SGENTEYDTIPHTNRTILK) are interaction with FYN when phosphorylated at Tyr-284. The ITSM signature appears at 302-307 (TVYSTV).

In terms of assembly, isoform 1 binds to SH2D1A when its cytoplasmic tail is phosphorylated in the presence of FYN (in vitro); low affinity binding, the physiological relevance of the interaction is questioned. Interacts with SH2D1B; in NK cells. Interacts (via ITSM phosphorylated on Tyr-302) with SH2D1B, PTPN6/SHP-1, PTPN11/SHP-2, INPP5D/SHIP1, CSK and FYN. In terms of tissue distribution, expressed in spleen, lymph node, peripheral blood leukocytes, bone marrow, small intestine, stomach, appendix, lung and trachea. Expression was detected in NK cells, activated B-cells, NK-cell line but not in promyelocytic, B-, or T-cell lines. Expressed in monocytes. Isoform 3 is expressed at much lower level than isoform 1.

It is found in the membrane. Self-ligand receptor of the signaling lymphocytic activation molecule (SLAM) family. SLAM receptors triggered by homo- or heterotypic cell-cell interactions are modulating the activation and differentiation of a wide variety of immune cells and thus are involved in the regulation and interconnection of both innate and adaptive immune response. Activities are controlled by presence or absence of small cytoplasmic adapter proteins, SH2D1A/SAP and/or SH2D1B/EAT-2. Isoform 1 mediates NK cell activation through a SH2D1A-independent extracellular signal-regulated ERK-mediated pathway. Positively regulates NK cell functions by a mechanism dependent on phosphorylated SH2D1B. Downstream signaling implicates PLCG1, PLCG2 and PI3K. In addition to heterotypic NK cells-target cells interactions also homotypic interactions between NK cells may contribute to activation. However, in the absence of SH2D1B, inhibits NK cell function. Also acts inhibitory in T-cells. May play a role in lymphocyte adhesion. In LPS-activated monocytes negatively regulates production of pro-inflammatory cytokines. Its function is as follows. Isoform 3 does not mediate any NK cell activation. This chain is SLAM family member 7 (SLAMF7), found in Homo sapiens (Human).